The chain runs to 150 residues: Meiotically up-regulated gene 108 protein (150 aa).

A compositionally biased stretch (polar residues) spans 1–11 (MANRFTSSDQT). The segment at 1–150 (MANRFTSSDQ…RDISLLGSTI (150 aa)) is disordered. A compositionally biased stretch (basic and acidic residues) spans 12–23 (QETHGHHVDKHS). Over residues 83 to 93 (NRSSQHTGRVN) the composition is skewed to polar residues.

It localises to the cytoplasm. It is found in the nucleus. Has a role in meiosis. This is Meiotically up-regulated gene 108 protein (mug108) from Schizosaccharomyces pombe (strain 972 / ATCC 24843) (Fission yeast).